Reading from the N-terminus, the 308-residue chain is uncharacterized protein (308 aa).

The next 7 membrane-spanning stretches (helical) occupy residues isoleucine 10–isoleucine 30, leucine 91–leucine 111, leucine 115–isoleucine 135, valine 178–methionine 198, isoleucine 219–leucine 239, leucine 251–isoleucine 271, and isoleucine 288–phenylalanine 308.

To M.jannaschii MJ0871, MJ1556 and MJ1589.

It localises to the cell membrane. This is an uncharacterized protein from Methanocaldococcus jannaschii (strain ATCC 43067 / DSM 2661 / JAL-1 / JCM 10045 / NBRC 100440) (Methanococcus jannaschii).